The following is a 130-amino-acid chain: Small ribosomal subunit protein uS9 (130 aa).

The protein belongs to the universal ribosomal protein uS9 family.

This chain is Small ribosomal subunit protein uS9, found in Streptococcus gordonii (strain Challis / ATCC 35105 / BCRC 15272 / CH1 / DL1 / V288).